A 565-amino-acid polypeptide reads, in one-letter code: Liver carboxylesterase 1 (565 aa).

The N-terminal stretch at 1 to 18 (MWLCALALASLAACTAWG) is a signal peptide. An N-linked (GlcNAc...) asparagine glycan is attached at asparagine 79. Cysteine 87 and cysteine 116 are disulfide-bonded. Residue serine 221 is the Acyl-ester intermediate of the active site. Cysteine 273 and cysteine 284 are oxidised to a cystine. The active-site Charge relay system is glutamate 353. An N-linked (GlcNAc...) asparagine glycan is attached at asparagine 389. The active-site Charge relay system is histidine 467. Position 565 (leucine 565) is a short sequence motif, prevents secretion from ER.

It belongs to the type-B carboxylesterase/lipase family. Monomer.

The protein localises to the endoplasmic reticulum lumen. The catalysed reaction is a carboxylic ester + H2O = an alcohol + a carboxylate + H(+). Its function is as follows. Involved in the detoxification of xenobiotics and in the activation of ester and amide prodrugs. In Oryctolagus cuniculus (Rabbit), this protein is Liver carboxylesterase 1.